A 634-amino-acid chain; its full sequence is Chaperone protein HtpG (634 aa).

Residues 1 to 342 form an a; substrate-binding region; sequence MTVETQKETL…SNDLSLNVSR (342 aa). Residues 343-559 form a b region; the sequence is EILQKDPIID…EQDLGLQMRQ (217 aa). A c region spans residues 560-634; it reads ILEASGQKVP…LNKLLVELSA (75 aa).

Belongs to the heat shock protein 90 family. In terms of assembly, homodimer.

It localises to the cytoplasm. Its function is as follows. Molecular chaperone. Has ATPase activity. This chain is Chaperone protein HtpG, found in Pseudomonas putida (strain ATCC 47054 / DSM 6125 / CFBP 8728 / NCIMB 11950 / KT2440).